A 273-amino-acid polypeptide reads, in one-letter code: Cell division protein FtsQ (273 aa).

Residues 1-20 (MPPRKAHTTRRTPAKKSGVR) lie on the Cytoplasmic side of the membrane. A helical membrane pass occupies residues 21-43 (RRLLRLLVTGVPVLALCGVAWLW). The Periplasmic portion of the chain corresponds to 44 to 273 (LESVRLTRIE…STQKSAMGHE (230 aa)). The region spanning 47-115 (VRLTRIEIVG…GTLRIAVEER (69 aa)) is the POTRA domain.

Belongs to the FtsQ/DivIB family. FtsQ subfamily.

It is found in the cell inner membrane. Its function is as follows. Essential cell division protein. The protein is Cell division protein FtsQ of Rhodothermus marinus (strain ATCC 43812 / DSM 4252 / R-10) (Rhodothermus obamensis).